A 180-amino-acid chain; its full sequence is Ribulose bisphosphate carboxylase small subunit, chloroplastic (180 aa).

Residues 1-56 (MASSVLSSAAVATRSNVAQANMVAPFTGLKSAASFPVSRKQNLDITSIASNGGRVQ) constitute a chloroplast transit peptide.

It belongs to the RuBisCO small chain family. Heterohexadecamer of 8 large and 8 small subunits. As to quaternary structure, (Microbial infection) Binds to tobamovirus movement protein at the plasmodesmata (e.g. tomato mosaic virus MP AC P69513); this interaction seems required for viral systemic movement.

It is found in the plastid. The protein resides in the chloroplast. It localises to the cell junction. Its subcellular location is the plasmodesma. Its function is as follows. RuBisCO catalyzes two reactions: the carboxylation of D-ribulose 1,5-bisphosphate, the primary event in carbon dioxide fixation, as well as the oxidative fragmentation of the pentose substrate. Both reactions occur simultaneously and in competition at the same active site. Although the small subunit is not catalytic it is essential for maximal activity. Involved in antiviral defenses. In terms of biological role, (Microbial infection) Required for tobamovirus movement (e.g. tobacco mosaic virus (TMV)). The polypeptide is Ribulose bisphosphate carboxylase small subunit, chloroplastic (Nicotiana benthamiana).